The chain runs to 473 residues: High-affinity proline transporter PutP (473 aa).

12 helical membrane-spanning segments follow: residues 32 to 52 (LSAG…GAMF), 56 to 76 (LSGA…WLYV), 114 to 134 (IVIL…GGVL), 146 to 166 (GLWI…FLAV), 171 to 191 (FVQG…TFFH), 218 to 238 (VLGI…PHII), 256 to 276 (IGMG…LGGI), 299 to 319 (ILFH…AIMS), 350 to 370 (LVFL…VLAW), 376 to 396 (ILGL…PVVL), 408 to 428 (GALA…NAGL), and 431 to 451 (FLYE…FVSI).

The protein belongs to the sodium:solute symporter (SSF) (TC 2.A.21) family.

Its subcellular location is the cell membrane. The enzyme catalyses L-proline(in) + Na(+)(in) = L-proline(out) + Na(+)(out). Its function is as follows. Catalyzes the high-affinity uptake of extracellular proline. Important for the use of proline as a sole carbon and energy source or a sole nitrogen source. This Bacillus subtilis (strain 168) protein is High-affinity proline transporter PutP.